Here is a 436-residue protein sequence, read N- to C-terminus: MPKPVIAIVGRPNVGKSTIFNRIVGERVSIVEDIPGVTRDRIYSAGEWLNHEFNIIDTGGIDIGDEPFLTQIRQQAEVAIDEADVIIFMTNGRDGVTAADEEVAKILYRSNKPVVLAVNKVDNPEMRSDIYDFYALGFGEPFPISGTHGLGLGDLLDEAAQHFPKIEEDGYDEDTIRFSLIGRPNVGKSSLVNALLGQERVIVSNVAGTTRDAVDTPYSKDGKDYVIIDTAGMRKKGKVYESTEKYSVLRALRAIERSDVVLVVLDGEEGIIEQDKKIAGYAHDSGRAVVIVVNKWDAVKKDEKTMKAFEENIRAHFQFLDYAPIVFLSAKTRKRTQTLIPVIDEVNESHSIRIQTNVLNDVIMDAVAMNPTPTHNGSRLKIFYATQVAVKPPTFVVFVNDPELLHFSYERFLKNRLRESFGFVGTPIHIIARARD.

2 EngA-type G domains span residues 4–167 (PVIA…PKIE) and 176–351 (IRFS…ESHS). Residues 10-17 (GRPNVGKS), 57-61 (DTGGI), 119-122 (NKVD), 182-189 (GRPNVGKS), 229-233 (DTAGM), and 294-297 (NKWD) each bind GTP. Residues 352 to 436 (IRIQTNVLND…PIHIIARARD (85 aa)) enclose the KH-like domain.

The protein belongs to the TRAFAC class TrmE-Era-EngA-EngB-Septin-like GTPase superfamily. EngA (Der) GTPase family. Associates with the 50S ribosomal subunit.

Its function is as follows. GTPase that plays an essential role in the late steps of ribosome biogenesis. This is GTPase Der from Bacillus cereus (strain ATCC 10987 / NRS 248).